The primary structure comprises 314 residues: DNA-directed RNA polymerase subunit alpha (314 aa).

Residues 1-228 form an alpha N-terminal domain (alpha-NTD) region; it reads MIEIEKPRIE…EHLNIFVGLT (228 aa). Residues 245 to 314 form an alpha C-terminal domain (alpha-CTD) region; the sequence is KEKVLEMSIE…DLGLGLRKED (70 aa).

The protein belongs to the RNA polymerase alpha chain family. As to quaternary structure, homodimer. The RNAP catalytic core consists of 2 alpha, 1 beta, 1 beta' and 1 omega subunit. When a sigma factor is associated with the core the holoenzyme is formed, which can initiate transcription.

The catalysed reaction is RNA(n) + a ribonucleoside 5'-triphosphate = RNA(n+1) + diphosphate. DNA-dependent RNA polymerase catalyzes the transcription of DNA into RNA using the four ribonucleoside triphosphates as substrates. This Staphylococcus aureus (strain bovine RF122 / ET3-1) protein is DNA-directed RNA polymerase subunit alpha.